A 336-amino-acid polypeptide reads, in one-letter code: C4-dicarboxylate-binding periplasmic protein DctP (336 aa).

The signal sequence occupies residues 1–31 (MTRLNTCTFIKQIVKMTSIAALLGASLNSWA). Residues lysine 48, lysine 101, arginine 176, asparagine 216, asparagine 220, and tyrosine 243 each coordinate (S)-malate. Residues lysine 48, lysine 101, arginine 176, asparagine 216, asparagine 220, and tyrosine 243 each coordinate succinate.

Belongs to the bacterial solute-binding protein 7 family. The complex comprises the extracytoplasmic solute receptor protein DctP, and the two transmembrane proteins DctQ and DctM.

It is found in the periplasm. In terms of biological role, part of the tripartite ATP-independent periplasmic (TRAP) transport system DctPQM involved in C4-dicarboxylates uptake. Required for the utilization of succinate, fumarate, L-malate and alpha-ketoglutarate. Binds succinate and malate. The chain is C4-dicarboxylate-binding periplasmic protein DctP from Shewanella loihica (strain ATCC BAA-1088 / PV-4).